The chain runs to 725 residues: Ribosomal RNA large subunit methyltransferase K/L (725 aa).

The 112-residue stretch at 46 to 157 (VAYRLCLWSR…RGQATLSLDL (112 aa)) folds into the THUMP domain.

This sequence belongs to the methyltransferase superfamily. RlmKL family.

The protein localises to the cytoplasm. It catalyses the reaction guanosine(2445) in 23S rRNA + S-adenosyl-L-methionine = N(2)-methylguanosine(2445) in 23S rRNA + S-adenosyl-L-homocysteine + H(+). The catalysed reaction is guanosine(2069) in 23S rRNA + S-adenosyl-L-methionine = N(2)-methylguanosine(2069) in 23S rRNA + S-adenosyl-L-homocysteine + H(+). Specifically methylates the guanine in position 2445 (m2G2445) and the guanine in position 2069 (m7G2069) of 23S rRNA. The protein is Ribosomal RNA large subunit methyltransferase K/L of Pseudomonas aeruginosa (strain ATCC 15692 / DSM 22644 / CIP 104116 / JCM 14847 / LMG 12228 / 1C / PRS 101 / PAO1).